Here is a 94-residue protein sequence, read N- to C-terminus: Small ribosomal subunit protein uS19 (94 aa).

This sequence belongs to the universal ribosomal protein uS19 family.

Its function is as follows. Protein S19 forms a complex with S13 that binds strongly to the 16S ribosomal RNA. The sequence is that of Small ribosomal subunit protein uS19 from Desulforudis audaxviator (strain MP104C).